The primary structure comprises 583 residues: Proline--tRNA ligase (583 aa).

This sequence belongs to the class-II aminoacyl-tRNA synthetase family. ProS type 1 subfamily. Homodimer.

The protein localises to the cytoplasm. The catalysed reaction is tRNA(Pro) + L-proline + ATP = L-prolyl-tRNA(Pro) + AMP + diphosphate. Catalyzes the attachment of proline to tRNA(Pro) in a two-step reaction: proline is first activated by ATP to form Pro-AMP and then transferred to the acceptor end of tRNA(Pro). As ProRS can inadvertently accommodate and process non-cognate amino acids such as alanine and cysteine, to avoid such errors it has two additional distinct editing activities against alanine. One activity is designated as 'pretransfer' editing and involves the tRNA(Pro)-independent hydrolysis of activated Ala-AMP. The other activity is designated 'posttransfer' editing and involves deacylation of mischarged Ala-tRNA(Pro). The misacylated Cys-tRNA(Pro) is not edited by ProRS. The chain is Proline--tRNA ligase from Aromatoleum aromaticum (strain DSM 19018 / LMG 30748 / EbN1) (Azoarcus sp. (strain EbN1)).